The primary structure comprises 32 residues: SKRLSNGCFGLKLDRIGAMSGLGCWRLINESK.

Cys-8 and Cys-24 are oxidised to a cystine.

Belongs to the natriuretic peptide family. Snake NP subfamily. In terms of tissue distribution, expressed by the venom gland.

Its subcellular location is the secreted. Snake venom natriuretic peptide that exhibits hypotensive and vasodepressor activity in rats. The sequence is that of Natriuretic peptide Coa_NP1 from Crotalus lutosus abyssus (Grand Canyon rattlesnake).